The following is a 155-amino-acid chain: MKLLIVAVGQRVPDWAQTAYDDYAKRFPPELKVELKAVKTEPRGSKTLETLYAAERERIEAAIPRGTRVVVLDERGTGLTTKALAQRLKDWQLGGDDVALVIGGPDGLDPAFRQAAHERIRLSDLTLPHAMVRVLLIEQLYRAWSVNAGHPYHRE.

Residues leucine 72, glycine 103, and 122–127 each bind S-adenosyl-L-methionine; that span reads LSDLTL.

This sequence belongs to the RNA methyltransferase RlmH family. In terms of assembly, homodimer.

It localises to the cytoplasm. The enzyme catalyses pseudouridine(1915) in 23S rRNA + S-adenosyl-L-methionine = N(3)-methylpseudouridine(1915) in 23S rRNA + S-adenosyl-L-homocysteine + H(+). In terms of biological role, specifically methylates the pseudouridine at position 1915 (m3Psi1915) in 23S rRNA. In Acidovorax sp. (strain JS42), this protein is Ribosomal RNA large subunit methyltransferase H.